The following is a 304-amino-acid chain: tRNA pseudouridine synthase B (304 aa).

Residue aspartate 40 is the Nucleophile of the active site.

The protein belongs to the pseudouridine synthase TruB family. Type 1 subfamily.

It catalyses the reaction uridine(55) in tRNA = pseudouridine(55) in tRNA. Its function is as follows. Responsible for synthesis of pseudouridine from uracil-55 in the psi GC loop of transfer RNAs. This Halalkalibacterium halodurans (strain ATCC BAA-125 / DSM 18197 / FERM 7344 / JCM 9153 / C-125) (Bacillus halodurans) protein is tRNA pseudouridine synthase B.